The chain runs to 343 residues: Methionine import ATP-binding protein MetN (343 aa).

The ABC transporter domain maps to 2–241 (ITLSHITKQF…PKTPLAQAFI (240 aa)). An ATP-binding site is contributed by 38–45 (GASGAGKS).

This sequence belongs to the ABC transporter superfamily. Methionine importer (TC 3.A.1.24) family. The complex is composed of two ATP-binding proteins (MetN), two transmembrane proteins (MetI) and a solute-binding protein (MetQ).

It is found in the cell inner membrane. It catalyses the reaction L-methionine(out) + ATP + H2O = L-methionine(in) + ADP + phosphate + H(+). It carries out the reaction D-methionine(out) + ATP + H2O = D-methionine(in) + ADP + phosphate + H(+). Part of the ABC transporter complex MetNIQ involved in methionine import. Responsible for energy coupling to the transport system. In Sodalis glossinidius (strain morsitans), this protein is Methionine import ATP-binding protein MetN.